A 291-amino-acid chain; its full sequence is Diaminopimelate epimerase (291 aa).

The substrate site is built by asparagine 17, glutamine 50, and asparagine 70. Cysteine 79 serves as the catalytic Proton donor. Substrate contacts are provided by residues 80–81, asparagine 167, asparagine 200, and 218–219; these read GN and ER. Cysteine 227 functions as the Proton acceptor in the catalytic mechanism. Residue 228 to 229 participates in substrate binding; sequence GS.

This sequence belongs to the diaminopimelate epimerase family. Homodimer.

It is found in the cytoplasm. It catalyses the reaction (2S,6S)-2,6-diaminopimelate = meso-2,6-diaminopimelate. Its pathway is amino-acid biosynthesis; L-lysine biosynthesis via DAP pathway; DL-2,6-diaminopimelate from LL-2,6-diaminopimelate: step 1/1. Its function is as follows. Catalyzes the stereoinversion of LL-2,6-diaminopimelate (L,L-DAP) to meso-diaminopimelate (meso-DAP), a precursor of L-lysine and an essential component of the bacterial peptidoglycan. In Bradyrhizobium diazoefficiens (strain JCM 10833 / BCRC 13528 / IAM 13628 / NBRC 14792 / USDA 110), this protein is Diaminopimelate epimerase.